A 491-amino-acid polypeptide reads, in one-letter code: Cytochrome P450 2F1 (491 aa).

Cys-436 provides a ligand contact to heme.

It belongs to the cytochrome P450 family. Heme serves as cofactor. As to expression, expressed in lung. Rarely detected in liver and placenta.

It localises to the endoplasmic reticulum membrane. It is found in the microsome membrane. The catalysed reaction is an organic molecule + reduced [NADPH--hemoprotein reductase] + O2 = an alcohol + oxidized [NADPH--hemoprotein reductase] + H2O + H(+). In terms of biological role, may be involved in the metabolism of various pneumotoxicants including naphthalene. Is able to dealkylate ethoxycoumarin, propoxycoumarin, and pentoxyresorufin but possesses no activity toward ethoxyresorufin and only trace dearylation activity toward benzyloxyresorufin. Bioactivates 3-methylindole (3MI) by dehydrogenation to the putative electrophile 3-methylene-indolenine. The polypeptide is Cytochrome P450 2F1 (CYP2F1) (Homo sapiens (Human)).